A 560-amino-acid polypeptide reads, in one-letter code: Glycolate permease GlcA (560 aa).

Topologically, residues 1-13 (MVTWTQMYMPMGG) are cytoplasmic. Residues 14–34 (LGLSALVALIPIIFFFVALAV) traverse the membrane as a helical segment. The Periplasmic segment spans residues 35–41 (LRLKGHV). The chain crosses the membrane as a helical span at residues 42 to 62 (AGAITLILSILIAIFAFKMPI). Residues 63–69 (DMAFAAA) are Cytoplasmic-facing. Residues 70–90 (GYGFIYGLWPIAWIIVAAVFL) form a helical membrane-spanning segment. At 91-130 (YKLTVASGQFDIIRSSVISITDDQRLQVLLIGFSFGALLE) the chain is on the periplasmic side. The helical transmembrane segment at 131–151 (GAAGFGAPVAITGALLVGLGF) threads the bilayer. At 152–158 (KPLYAAG) the chain is on the cytoplasmic side. A helical transmembrane segment spans residues 159–179 (LCLIANTAPVAFGALGVPILV). Residues 180–199 (AGQVTGIDPFHIGAMAGRQL) lie on the Periplasmic side of the membrane. A helical transmembrane segment spans residues 200 to 220 (PFLSVLVPFWLVAMMDGWKGV). The Cytoplasmic segment spans residues 221-225 (KETWP). Residues 226-246 (AALVAGGSFAVTQFFTSNYIG) form a helical membrane-spanning segment. Over 247–248 (PE) the chain is Periplasmic. Residues 249–269 (LPDITSALVSIVSLALFLKVW) form a helical membrane-spanning segment. Residues 270 to 313 (RPKNTETAISMGQSAGAMVVNKPSSGGPVPSEYSLGQIIRAWSP) lie on the Cytoplasmic side of the membrane. A helical transmembrane segment spans residues 314-334 (FLILTVLVTIWTMKPFKALFA). The Periplasmic portion of the chain corresponds to 335-378 (PGGAFYSLVINFQIPHLHQQVLKAAPIVAQPTPMDAVFKFDPLS). The helical transmembrane segment at 379–399 (AGGTAIFIAAIISIFILGVGI) threads the bilayer. At 400 to 408 (KKGIGVFAE) the chain is on the cytoplasmic side. A helical membrane pass occupies residues 409–429 (TLISLKWPILSIGMVLAFAFV). At 430-438 (TNYSGMSTT) the chain is on the periplasmic side. A helical transmembrane segment spans residues 439–459 (LALVLAGTGVMFPFFSPFLGW). Topologically, residues 460-536 (LGVFLTGSDT…ELFRYTVKHS (77 aa)) are cytoplasmic. The helical transmembrane segment at 537-557 (LIFASVIGIITLLQAYVFTGM) threads the bilayer. Topologically, residues 558-560 (LVS) are periplasmic.

Belongs to the lactate permease family.

The protein localises to the cell inner membrane. It catalyses the reaction glycolate(in) + H(+)(in) = glycolate(out) + H(+)(out). The catalysed reaction is (S)-lactate(in) + H(+)(in) = (S)-lactate(out) + H(+)(out). It carries out the reaction (R)-lactate(in) + H(+)(in) = (R)-lactate(out) + H(+)(out). Inhibited by the proton ionophore carbonyl cyanide m-chlorophenylhydrazone (CCCP). Uptake of glycolate across the membrane. Can also transport L-lactate and D-lactate. Seems to be driven by a proton motive force. This is Glycolate permease GlcA from Escherichia coli (strain K12).